We begin with the raw amino-acid sequence, 348 residues long: Holliday junction branch migration complex subunit RuvB (348 aa).

Positions 4–184 are large ATPase domain (RuvB-L); sequence ADRLIAASGR…FGIVQRLEFY (181 aa). ATP-binding positions include Ile-23, Arg-24, Gly-65, Lys-68, Thr-69, Thr-70, 131–133, Arg-174, Tyr-184, and Arg-221; that span reads EDF. Thr-69 is a Mg(2+) binding site. The tract at residues 185–255 is small ATPAse domain (RuvB-S); the sequence is NDKDLSTIVS…VADMALNLLD (71 aa). The segment at 258-348 is head domain (RuvB-H); it reads ERGFDHSDRR…GGDFSEPGDE (91 aa). Arg-294, Arg-313, and Arg-318 together coordinate DNA.

This sequence belongs to the RuvB family. Homohexamer. Forms an RuvA(8)-RuvB(12)-Holliday junction (HJ) complex. HJ DNA is sandwiched between 2 RuvA tetramers; dsDNA enters through RuvA and exits via RuvB. An RuvB hexamer assembles on each DNA strand where it exits the tetramer. Each RuvB hexamer is contacted by two RuvA subunits (via domain III) on 2 adjacent RuvB subunits; this complex drives branch migration. In the full resolvosome a probable DNA-RuvA(4)-RuvB(12)-RuvC(2) complex forms which resolves the HJ.

It localises to the cytoplasm. The catalysed reaction is ATP + H2O = ADP + phosphate + H(+). Its function is as follows. The RuvA-RuvB-RuvC complex processes Holliday junction (HJ) DNA during genetic recombination and DNA repair, while the RuvA-RuvB complex plays an important role in the rescue of blocked DNA replication forks via replication fork reversal (RFR). RuvA specifically binds to HJ cruciform DNA, conferring on it an open structure. The RuvB hexamer acts as an ATP-dependent pump, pulling dsDNA into and through the RuvAB complex. RuvB forms 2 homohexamers on either side of HJ DNA bound by 1 or 2 RuvA tetramers; 4 subunits per hexamer contact DNA at a time. Coordinated motions by a converter formed by DNA-disengaged RuvB subunits stimulates ATP hydrolysis and nucleotide exchange. Immobilization of the converter enables RuvB to convert the ATP-contained energy into a lever motion, pulling 2 nucleotides of DNA out of the RuvA tetramer per ATP hydrolyzed, thus driving DNA branch migration. The RuvB motors rotate together with the DNA substrate, which together with the progressing nucleotide cycle form the mechanistic basis for DNA recombination by continuous HJ branch migration. Branch migration allows RuvC to scan DNA until it finds its consensus sequence, where it cleaves and resolves cruciform DNA. The sequence is that of Holliday junction branch migration complex subunit RuvB from Pseudomonas putida (strain ATCC 47054 / DSM 6125 / CFBP 8728 / NCIMB 11950 / KT2440).